A 405-amino-acid polypeptide reads, in one-letter code: Tryptophan synthase beta chain (405 aa).

Residue Lys-95 is modified to N6-(pyridoxal phosphate)lysine.

The protein belongs to the TrpB family. In terms of assembly, tetramer of two alpha and two beta chains. The cofactor is pyridoxal 5'-phosphate.

The enzyme catalyses (1S,2R)-1-C-(indol-3-yl)glycerol 3-phosphate + L-serine = D-glyceraldehyde 3-phosphate + L-tryptophan + H2O. It functions in the pathway amino-acid biosynthesis; L-tryptophan biosynthesis; L-tryptophan from chorismate: step 5/5. Functionally, the beta subunit is responsible for the synthesis of L-tryptophan from indole and L-serine. In Pseudomonas putida (strain ATCC 700007 / DSM 6899 / JCM 31910 / BCRC 17059 / LMG 24140 / F1), this protein is Tryptophan synthase beta chain.